Reading from the N-terminus, the 351-residue chain is Glycerol-3-phosphate dehydrogenase 1-like protein (351 aa).

12–17 (GSGNWG) provides a ligand contact to NAD(+). Lys-122 provides a ligand contact to substrate. Residue Ala-155 participates in NAD(+) binding. Lys-206 (proton acceptor) is an active-site residue. Arg-271, Lys-298, and Gln-300 together coordinate NAD(+). Position 271–272 (271–272 (RN)) interacts with substrate.

It belongs to the NAD-dependent glycerol-3-phosphate dehydrogenase family. Interacts with SCN5A.

Its subcellular location is the cytoplasm. It catalyses the reaction sn-glycerol 3-phosphate + NAD(+) = dihydroxyacetone phosphate + NADH + H(+). Functionally, plays a role in regulating cardiac sodium current; decreased enzymatic activity with resulting increased levels of glycerol 3-phosphate activating the DPD1L-dependent SCN5A phosphorylation pathway, may ultimately lead to decreased sodium current; cardiac sodium current may also be reduced due to alterations of NAD(H) balance induced by DPD1L. The sequence is that of Glycerol-3-phosphate dehydrogenase 1-like protein (GPD1L) from Pongo abelii (Sumatran orangutan).